A 217-amino-acid chain; its full sequence is Large ribosomal subunit protein uL3 (217 aa).

The segment covering 134-146 (GRATHGNSRSHNV) has biased composition (polar residues). Residues 134–154 (GRATHGNSRSHNVPGSIGMAQ) are disordered. Glutamine 154 carries the post-translational modification N5-methylglutamine.

This sequence belongs to the universal ribosomal protein uL3 family. In terms of assembly, part of the 50S ribosomal subunit. Forms a cluster with proteins L14 and L19. Post-translationally, methylated by PrmB.

One of the primary rRNA binding proteins, it binds directly near the 3'-end of the 23S rRNA, where it nucleates assembly of the 50S subunit. This chain is Large ribosomal subunit protein uL3, found in Burkholderia lata (strain ATCC 17760 / DSM 23089 / LMG 22485 / NCIMB 9086 / R18194 / 383).